We begin with the raw amino-acid sequence, 251 residues long: Ubiquinone/menaquinone biosynthesis C-methyltransferase UbiE (251 aa).

S-adenosyl-L-methionine-binding positions include threonine 74, aspartate 95, and asparagine 123–alanine 124.

Belongs to the class I-like SAM-binding methyltransferase superfamily. MenG/UbiE family.

It catalyses the reaction a 2-demethylmenaquinol + S-adenosyl-L-methionine = a menaquinol + S-adenosyl-L-homocysteine + H(+). It carries out the reaction a 2-methoxy-6-(all-trans-polyprenyl)benzene-1,4-diol + S-adenosyl-L-methionine = a 5-methoxy-2-methyl-3-(all-trans-polyprenyl)benzene-1,4-diol + S-adenosyl-L-homocysteine + H(+). It participates in quinol/quinone metabolism; menaquinone biosynthesis; menaquinol from 1,4-dihydroxy-2-naphthoate: step 2/2. The protein operates within cofactor biosynthesis; ubiquinone biosynthesis. In terms of biological role, methyltransferase required for the conversion of demethylmenaquinol (DMKH2) to menaquinol (MKH2) and the conversion of 2-polyprenyl-6-methoxy-1,4-benzoquinol (DDMQH2) to 2-polyprenyl-3-methyl-6-methoxy-1,4-benzoquinol (DMQH2). This chain is Ubiquinone/menaquinone biosynthesis C-methyltransferase UbiE, found in Pseudoalteromonas translucida (strain TAC 125).